The sequence spans 171 residues: Myosin regulatory light chain 12B (171 aa).

Residue T18 is modified to Phosphothreonine; by MLCK and ZIPK/DAPK3. Position 19 is a phosphoserine; by MLCK and ZIPK/DAPK3 (S19). EF-hand domains follow at residues 28-63, 97-132, and 133-168; these read SQIQ…LGKN, DPED…MGDR, and FTDE…GAKD. Ca(2+) is bound by residues D41, N43, D45, and D52.

In terms of assembly, myosin is a hexamer of 2 heavy chains and 4 light chains: interacts with myosin heavy chain MYO19. In terms of processing, phosphorylation increases the actin-activated myosin ATPase activity and thereby regulates the contractile activity. It is required to generate the driving force in the migration of the cells but not necessary for localization of myosin-2 at the leading edge. Phosphorylation is reduced following epigallocatechin-3-O-gallate treatment.

Its function is as follows. Myosin regulatory subunit that plays an important role in regulation of both smooth muscle and nonmuscle cell contractile activity via its phosphorylation. Phosphorylation triggers actin polymerization in vascular smooth muscle. Implicated in cytokinesis, receptor capping, and cell locomotion. The protein is Myosin regulatory light chain 12B (MYL12B) of Bos taurus (Bovine).